Here is a 914-residue protein sequence, read N- to C-terminus: Ubiquitin carboxyl-terminal hydrolase 20 (914 aa).

The segment at D6–D111 adopts a UBP-type zinc-finger fold. C8, H10, C30, C33, C43, C48, C53, H60, H64, H70, C83, and C86 together coordinate Zn(2+). Residues S112, S132, and S134 each carry the phosphoserine modification. A USP domain is found at T145 to S685. Catalysis depends on C154, which acts as the Nucleophile. 2 disordered regions span residues L257 to D347 and Q360 to V415. A Phosphothreonine modification is found at T258. Residues E259–S279 are compositionally biased toward basic and acidic residues. Residue S305 is modified to Phosphoserine. Residues E316–F332 show a composition bias toward basic and acidic residues. S368 is subject to Phosphoserine. Residue T377 is modified to Phosphothreonine. 2 positions are modified to phosphoserine: S408 and S413. H643 functions as the Proton acceptor in the catalytic mechanism. 2 consecutive DUSP domains span residues E687–C780 and A789–V892.

This sequence belongs to the peptidase C19 family. USP20/USP33 subfamily. In terms of assembly, interacts with VHL, leading to its ubiquitination and subsequent degradation. Interacts with CCP110. Interacts with DIO2. Interacts with HIF1A. Interacts with ADRB2. Interacts with USP18. In terms of processing, ubiquitinated via a VHL-dependent pathway for proteasomal degradation.

It is found in the cytoplasm. The protein resides in the endoplasmic reticulum. The protein localises to the perinuclear region. It localises to the cytoskeleton. Its subcellular location is the microtubule organizing center. It is found in the centrosome. It carries out the reaction Thiol-dependent hydrolysis of ester, thioester, amide, peptide and isopeptide bonds formed by the C-terminal Gly of ubiquitin (a 76-residue protein attached to proteins as an intracellular targeting signal).. Functionally, deubiquitinating enzyme that plays a role in many cellular processes including autophagy, cellular antiviral response or membrane protein biogenesis. Attenuates TLR4-mediated NF-kappa-B signaling by cooperating with beta-arrestin-2/ARRB2 and inhibiting TRAF6 autoubiquitination. Promotes cellular antiviral responses by deconjugating 'Lys-33' and 'Lys-48'-linked ubiquitination of STING1 leading to its stabilization. Plays an essential role in autophagy induction by regulating the ULK1 stability through deubiquitination of ULK1. Acts as a positive regulator for NF-kappa-B activation by TNF-alpha through deubiquitinating 'Lys-48'-linked polyubiquitination of SQSTM1, leading to its increased stability. Acts as a regulator of G-protein coupled receptor (GPCR) signaling by mediating the deubiquitination beta-2 adrenergic receptor (ADRB2). Plays a central role in ADRB2 recycling and resensitization after prolonged agonist stimulation by constitutively binding ADRB2, mediating deubiquitination of ADRB2 and inhibiting lysosomal trafficking of ADRB2. Upon dissociation, it is probably transferred to the translocated beta-arrestins, possibly leading to beta-arrestins deubiquitination and disengagement from ADRB2. This suggests the existence of a dynamic exchange between the ADRB2 and beta-arrestins. Deubiquitinates DIO2, thereby regulating thyroid hormone regulation. Deubiquitinates HIF1A, leading to stabilize HIF1A and enhance HIF1A-mediated activity. Deubiquitinates MCL1, a pivotal member of the anti-apoptotic Bcl-2 protein family to regulate its stability. Within the endoplasmic reticulum, participates with USP33 in the rescue of post-translationally targeted membrane proteins that are inappropriately ubiquitinated by the cytosolic protein quality control in the cytosol. The polypeptide is Ubiquitin carboxyl-terminal hydrolase 20 (USP20) (Homo sapiens (Human)).